The sequence spans 289 residues: MAAITAAMVKELRERTGLGMMECKKALVEAEGNVETAIEELRKSSGLKAAKKAGRTAAEGVSLVKVSDDNTVAFILEVNSETDFVARDDNFMNFANDVLNVAFEKGETDVAKLMEGDLEAKREALVQKIGENITVRRIIKVEGPVVGGYVHSNNKIASVVALTAGNEELARDIAMHVAAVNPRVGKPDDMPAEELEKEKEIIKAQPDMEGKPAEIVEKMMGGRIKKFLAENSLVEQPFVKNPDQKVGDLIKSAGGDLVGFIRLEVGEGIEKEEVDFAAEVAAAAGTGKA.

Residues Thr82–Val85 are involved in Mg(2+) ion dislocation from EF-Tu.

This sequence belongs to the EF-Ts family.

Its subcellular location is the cytoplasm. Its function is as follows. Associates with the EF-Tu.GDP complex and induces the exchange of GDP to GTP. It remains bound to the aminoacyl-tRNA.EF-Tu.GTP complex up to the GTP hydrolysis stage on the ribosome. The chain is Elongation factor Ts from Marinobacter nauticus (strain ATCC 700491 / DSM 11845 / VT8) (Marinobacter aquaeolei).